Reading from the N-terminus, the 98-residue chain is Large ribosomal subunit protein uL23 (98 aa).

It belongs to the universal ribosomal protein uL23 family. In terms of assembly, part of the 50S ribosomal subunit. Contacts protein L29, and trigger factor when it is bound to the ribosome.

In terms of biological role, one of the early assembly proteins it binds 23S rRNA. One of the proteins that surrounds the polypeptide exit tunnel on the outside of the ribosome. Forms the main docking site for trigger factor binding to the ribosome. The protein is Large ribosomal subunit protein uL23 of Rickettsia akari (strain Hartford).